We begin with the raw amino-acid sequence, 221 residues long: GTP cyclohydrolase 1 (221 aa).

Zn(2+) contacts are provided by C109, H112, and C180.

Belongs to the GTP cyclohydrolase I family. As to quaternary structure, toroid-shaped homodecamer, composed of two pentamers of five dimers.

The enzyme catalyses GTP + H2O = 7,8-dihydroneopterin 3'-triphosphate + formate + H(+). The protein operates within cofactor biosynthesis; 7,8-dihydroneopterin triphosphate biosynthesis; 7,8-dihydroneopterin triphosphate from GTP: step 1/1. The chain is GTP cyclohydrolase 1 from Sodalis glossinidius (strain morsitans).